Consider the following 243-residue polypeptide: Hydroxyacylglutathione hydrolase (243 aa).

Zn(2+) contacts are provided by His59, His61, Asp63, His64, His117, Asp135, and His173.

The protein belongs to the metallo-beta-lactamase superfamily. Glyoxalase II family. As to quaternary structure, monomer. Zn(2+) is required as a cofactor.

The enzyme catalyses an S-(2-hydroxyacyl)glutathione + H2O = a 2-hydroxy carboxylate + glutathione + H(+). It functions in the pathway secondary metabolite metabolism; methylglyoxal degradation; (R)-lactate from methylglyoxal: step 2/2. Functionally, thiolesterase that catalyzes the hydrolysis of S-D-lactoyl-glutathione to form glutathione and D-lactic acid. The polypeptide is Hydroxyacylglutathione hydrolase (Acidiphilium cryptum (strain JF-5)).